Here is a 536-residue protein sequence, read N- to C-terminus: Chaperonin GroEL (536 aa).

Residues 29-32, 86-90, G412, and D493 each bind ATP; these read TLGP and DGTTT.

This sequence belongs to the chaperonin (HSP60) family. As to quaternary structure, forms a cylinder of 14 subunits composed of two heptameric rings stacked back-to-back. Interacts with the co-chaperonin GroES.

It localises to the cytoplasm. The catalysed reaction is ATP + H2O + a folded polypeptide = ADP + phosphate + an unfolded polypeptide.. Functionally, together with its co-chaperonin GroES, plays an essential role in assisting protein folding. The GroEL-GroES system forms a nano-cage that allows encapsulation of the non-native substrate proteins and provides a physical environment optimized to promote and accelerate protein folding. The protein is Chaperonin GroEL of Onion yellows phytoplasma (strain OY-M).